Reading from the N-terminus, the 86-residue chain is uncharacterized protein (86 aa).

3 consecutive transmembrane segments (helical) span residues 4 to 24 (ILII…IAAV), 34 to 54 (MGLV…ILIN), and 64 to 84 (DIAY…ARVL).

The protein to M.jannaschii MJ1223.

It is found in the cell membrane. This is an uncharacterized protein from Methanothermobacter thermautotrophicus (strain ATCC 29096 / DSM 1053 / JCM 10044 / NBRC 100330 / Delta H) (Methanobacterium thermoautotrophicum).